The chain runs to 311 residues: Ribonuclease HIII (311 aa).

One can recognise an RNase H type-2 domain in the interval 95 to 311; that stretch reads MSIVGSDEVG…NTEKAFRLLK (217 aa). The a divalent metal cation site is built by Asp101, Glu102, and Asp206.

This sequence belongs to the RNase HII family. RnhC subfamily. The cofactor is Mn(2+). It depends on Mg(2+) as a cofactor.

The protein localises to the cytoplasm. It carries out the reaction Endonucleolytic cleavage to 5'-phosphomonoester.. Endonuclease that specifically degrades the RNA of RNA-DNA hybrids. The chain is Ribonuclease HIII from Bacillus thuringiensis subsp. konkukian (strain 97-27).